A 128-amino-acid polypeptide reads, in one-letter code: MDHSAEKAAANAEVPQELLEEMLWYFRAEDAAPWNYSILVLAVLVVMTSMFLLRRSILANRNRKKQPQDKETPEDLHLDDSIMKENNSQVFLRETLISEKPDLAPGEPELKEKDSSLVFLPDPQETES.

At 1–30 the chain is on the extracellular side; it reads MDHSAEKAAANAEVPQELLEEMLWYFRAED. Residues 31 to 53 traverse the membrane as a helical segment; it reads AAPWNYSILVLAVLVVMTSMFLL. At 54-128 the chain is on the cytoplasmic side; the sequence is RRSILANRNR…FLPDPQETES (75 aa). Disordered stretches follow at residues 61–80 and 101–128; these read RNRKKQPQDKETPEDLHLDD and PDLAPGEPELKEKDSSLVFLPDPQETES. 2 stretches are compositionally biased toward basic and acidic residues: residues 66–80 and 101–115; these read QPQDKETPEDLHLDD and PDLAPGEPELKEKDS. Ser116 is modified (phosphoserine).

The protein belongs to the OST-beta family. In terms of assembly, interacts with SLC51A. The Ost-alpha/Ost-beta complex is a heterodimer composed of alpha (SLC51A) and beta (SLC51B) subunit; induces the transport of SLC51A from the endoplasmic reticulum to the plasma membrane. In terms of tissue distribution, present at high level in ileum. In ileum, it is restricted to the apical domain on the mature villus enterocytes with little detectable expression in the goblet cells or crypt enterocytes (at protein level). Expressed in kidney but not in heart, brain, liver, spleen, embryo, lung, thymus, ovary nor testis.

It localises to the cell membrane. It carries out the reaction taurocholate(out) = taurocholate(in). It catalyses the reaction tauroursodeoxycholate(out) = tauroursodeoxycholate(in). The enzyme catalyses glycoursodeoxycholate(out) = glycoursodeoxycholate(in). The catalysed reaction is glycocholate(out) = glycocholate(in). It carries out the reaction taurochenodeoxycholate(out) = taurochenodeoxycholate(in). It catalyses the reaction glycochenodeoxycholate(out) = glycochenodeoxycholate(in). The enzyme catalyses taurodeoxycholate(out) = taurodeoxycholate(in). The catalysed reaction is glycodeoxycholate(out) = glycodeoxycholate(in). It carries out the reaction prostaglandin E2(out) = prostaglandin E2(in). It catalyses the reaction estrone 3-sulfate(out) = estrone 3-sulfate(in). The enzyme catalyses dehydroepiandrosterone 3-sulfate(out) = dehydroepiandrosterone 3-sulfate(in). Essential component of the Ost-alpha/Ost-beta complex, a heterodimer that acts as the intestinal basolateral transporter responsible for bile acid export from enterocytes into portal blood. The Ost-alpha/Ost-beta complex efficiently transports the major species of bile acids (taurocholate). Taurine conjugates are transported more efficiently across the basolateral membrane than glycine-conjugated bile acids. Can also transport steroids such as estrone 3-sulfate and dehydroepiandrosterone 3-sulfate, therefore playing a role in the enterohepatic circulation of sterols. Able to transport eicosanoids such as prostaglandin E2. Modulates SLC51A glycosylation, membrane trafficking and stability activities. The protein is Organic solute transporter subunit beta (Slc51b) of Mus musculus (Mouse).